The sequence spans 352 residues: tRNA pseudouridine synthase D (352 aa).

The active-site Nucleophile is D81. The 147-residue stretch at 157–303 (GVPNYFGTQR…MDHERRILRL (147 aa)) folds into the TRUD domain.

It belongs to the pseudouridine synthase TruD family.

It catalyses the reaction uridine(13) in tRNA = pseudouridine(13) in tRNA. Functionally, responsible for synthesis of pseudouridine from uracil-13 in transfer RNAs. The polypeptide is tRNA pseudouridine synthase D (Pseudomonas putida (strain GB-1)).